A 162-amino-acid chain; its full sequence is Large ribosomal subunit protein uL10 (162 aa).

This sequence belongs to the universal ribosomal protein uL10 family. As to quaternary structure, part of the ribosomal stalk of the 50S ribosomal subunit. The N-terminus interacts with L11 and the large rRNA to form the base of the stalk. The C-terminus forms an elongated spine to which L12 dimers bind in a sequential fashion forming a multimeric L10(L12)X complex.

Its function is as follows. Forms part of the ribosomal stalk, playing a central role in the interaction of the ribosome with GTP-bound translation factors. This Borrelia garinii subsp. bavariensis (strain ATCC BAA-2496 / DSM 23469 / PBi) (Borreliella bavariensis) protein is Large ribosomal subunit protein uL10.